The sequence spans 146 residues: Ecotin-like protein 1 (146 aa).

Belongs to the protease inhibitor I11 (ecotin) family.

This Leishmania major protein is Ecotin-like protein 1 (ISP1).